A 375-amino-acid chain; its full sequence is MAVLVKWPWLGVAIPCFLISFTGYFAHFFVLTNFLSFKELLWFQVSLSMIWISYWKAIYKNPGRPTKGFRPLRYEWQNYCTKCETYKPERTHHCKRCNQCVLVMDHHCPWTMNCVGYKNFPHFIRFLFWIIATTGILLHYFVKRIKFTWVNRYATANLVSKQELIFLTILTPLDAFILLTISLLFVRCVKNQIVNGRTQIEAWEMDRIENLFYHQRLLPQLLTNLKEIYPGSLEGQEKEVEEFLSSSTCSFDEVINFPYDINPWVNLLNCMGSPLNWLNPFGGPKADGMVFQKNEISDYDEATSIQDKLLALPWPPDDTRHGIAFPSVSHVEKDTQGGEQVVRRRHVPIAVPPRNEWYNDWGESLEHFGVDVEVE.

Over 1-9 (MAVLVKWPW) the chain is Cytoplasmic. Residues 10–30 (LGVAIPCFLISFTGYFAHFFV) traverse the membrane as a helical segment. Residues 31–33 (LTN) lie on the Lumenal side of the membrane. A helical transmembrane segment spans residues 34-54 (FLSFKELLWFQVSLSMIWISY). Residues 55-121 (WKAIYKNPGR…MNCVGYKNFP (67 aa)) are Cytoplasmic-facing. The region spanning 78-128 (NYCTKCETYKPERTHHCKRCNQCVLVMDHHCPWTMNCVGYKNFPHFIRFLF) is the DHHC domain. Cysteine 108 acts as the S-palmitoyl cysteine intermediate in catalysis. Residues 122 to 142 (HFIRFLFWIIATTGILLHYFV) form a helical membrane-spanning segment. The Lumenal segment spans residues 143-164 (KRIKFTWVNRYATANLVSKQEL). Residues 165-185 (IFLTILTPLDAFILLTISLLF) traverse the membrane as a helical segment. At 186 to 375 (VRCVKNQIVN…EHFGVDVEVE (190 aa)) the chain is on the cytoplasmic side.

This sequence belongs to the DHHC palmitoyltransferase family. PFA4 subfamily.

It localises to the endoplasmic reticulum membrane. The enzyme catalyses L-cysteinyl-[protein] + hexadecanoyl-CoA = S-hexadecanoyl-L-cysteinyl-[protein] + CoA. Its function is as follows. Mediates the reversible addition of palmitate to target proteins, thereby regulating their membrane association and biological function. This chain is Palmitoyltransferase PFA4, found in Eremothecium gossypii (strain ATCC 10895 / CBS 109.51 / FGSC 9923 / NRRL Y-1056) (Yeast).